The following is an 87-amino-acid chain: Phosphoribosyl-ATP pyrophosphatase (87 aa).

The protein belongs to the PRA-PH family.

It is found in the cytoplasm. It carries out the reaction 1-(5-phospho-beta-D-ribosyl)-ATP + H2O = 1-(5-phospho-beta-D-ribosyl)-5'-AMP + diphosphate + H(+). It participates in amino-acid biosynthesis; L-histidine biosynthesis; L-histidine from 5-phospho-alpha-D-ribose 1-diphosphate: step 2/9. The protein is Phosphoribosyl-ATP pyrophosphatase of Nocardioides sp. (strain ATCC BAA-499 / JS614).